We begin with the raw amino-acid sequence, 120 residues long: U13-lycotoxin-Ls1f (120 aa).

An N-terminal signal peptide occupies residues 1 to 16 (MKILFVLISILYAVYC). The propeptide occupies 17–54 (FSSEEDVDSAYLANELEPVEDINSEQYAALEPKEEQER). 4 disulfides stabilise this stretch: Cys56–Cys70, Cys63–Cys76, Cys69–Cys87, and Cys78–Cys85. Positions 56–95 (CAGMGQDCKDDCDCCLNIATCNCWFGRYFCSCTFGDYQTC) constitute an Agouti domain.

Belongs to the neurotoxin 05 (agouti) family. Contains 6 disulfide bonds. As to expression, expressed by the venom gland.

Its subcellular location is the secreted. The sequence is that of U13-lycotoxin-Ls1f from Lycosa singoriensis (Wolf spider).